Here is a 217-residue protein sequence, read N- to C-terminus: 3-dehydroquinate dehydratase (217 aa).

3-dehydroquinate-binding positions include 26-28 (EFR) and arginine 59. The active-site Proton donor/acceptor is histidine 114. Lysine 140 serves as the catalytic Schiff-base intermediate with substrate. 2 residues coordinate 3-dehydroquinate: arginine 178 and glutamine 201.

The protein belongs to the type-I 3-dehydroquinase family. Homodimer.

It carries out the reaction 3-dehydroquinate = 3-dehydroshikimate + H2O. Its pathway is metabolic intermediate biosynthesis; chorismate biosynthesis; chorismate from D-erythrose 4-phosphate and phosphoenolpyruvate: step 3/7. In terms of biological role, involved in the third step of the chorismate pathway, which leads to the biosynthesis of aromatic amino acids. Catalyzes the cis-dehydration of 3-dehydroquinate (DHQ) and introduces the first double bond of the aromatic ring to yield 3-dehydroshikimate. The sequence is that of 3-dehydroquinate dehydratase from Hydrogenobaculum sp. (strain Y04AAS1).